The chain runs to 232 residues: Uridylate kinase (232 aa).

Residue G13–S14 coordinates ATP. G52 lines the UMP pocket. The ATP site is built by G53 and R57. UMP is bound by residues D74 and L122–T128. Positions 147, 153, and 156 each coordinate ATP.

This sequence belongs to the UMP kinase family. Homohexamer.

Its subcellular location is the cytoplasm. It catalyses the reaction UMP + ATP = UDP + ADP. The protein operates within pyrimidine metabolism; CTP biosynthesis via de novo pathway; UDP from UMP (UMPK route): step 1/1. Its activity is regulated as follows. Inhibited by UTP. Catalyzes the reversible phosphorylation of UMP to UDP. This chain is Uridylate kinase, found in Thermofilum pendens (strain DSM 2475 / Hrk 5).